The primary structure comprises 611 residues: Dihydroxy-acid dehydratase (611 aa).

Asp81 contacts Mg(2+). Cys122 is a binding site for [2Fe-2S] cluster. Residues Asp123 and Lys124 each contribute to the Mg(2+) site. Lys124 carries the post-translational modification N6-carboxylysine. Cys195 contacts [2Fe-2S] cluster. Glu491 provides a ligand contact to Mg(2+). Ser517 functions as the Proton acceptor in the catalytic mechanism.

Belongs to the IlvD/Edd family. As to quaternary structure, homodimer. It depends on [2Fe-2S] cluster as a cofactor. Mg(2+) serves as cofactor.

It carries out the reaction (2R)-2,3-dihydroxy-3-methylbutanoate = 3-methyl-2-oxobutanoate + H2O. The enzyme catalyses (2R,3R)-2,3-dihydroxy-3-methylpentanoate = (S)-3-methyl-2-oxopentanoate + H2O. The protein operates within amino-acid biosynthesis; L-isoleucine biosynthesis; L-isoleucine from 2-oxobutanoate: step 3/4. Its pathway is amino-acid biosynthesis; L-valine biosynthesis; L-valine from pyruvate: step 3/4. Functions in the biosynthesis of branched-chain amino acids. Catalyzes the dehydration of (2R,3R)-2,3-dihydroxy-3-methylpentanoate (2,3-dihydroxy-3-methylvalerate) into 2-oxo-3-methylpentanoate (2-oxo-3-methylvalerate) and of (2R)-2,3-dihydroxy-3-methylbutanoate (2,3-dihydroxyisovalerate) into 2-oxo-3-methylbutanoate (2-oxoisovalerate), the penultimate precursor to L-isoleucine and L-valine, respectively. The sequence is that of Dihydroxy-acid dehydratase from Actinobacillus pleuropneumoniae serotype 5b (strain L20).